Reading from the N-terminus, the 363-residue chain is NADH-quinone oxidoreductase subunit H (363 aa).

The next 9 helical transmembrane spans lie at Gly62–Phe82, Ala94–Val114, Val127–Gly147, Val166–Ser186, Phe202–Val222, Ile239–Leu257, Ile264–Val286, Leu293–Ala313, and Phe339–Ile359.

This sequence belongs to the complex I subunit 1 family. NDH-1 is composed of 14 different subunits. Subunits NuoA, H, J, K, L, M, N constitute the membrane sector of the complex.

Its subcellular location is the cell inner membrane. The catalysed reaction is a quinone + NADH + 5 H(+)(in) = a quinol + NAD(+) + 4 H(+)(out). Functionally, NDH-1 shuttles electrons from NADH, via FMN and iron-sulfur (Fe-S) centers, to quinones in the respiratory chain. The immediate electron acceptor for the enzyme in this species is believed to be ubiquinone. Couples the redox reaction to proton translocation (for every two electrons transferred, four hydrogen ions are translocated across the cytoplasmic membrane), and thus conserves the redox energy in a proton gradient. This subunit may bind ubiquinone. The chain is NADH-quinone oxidoreductase subunit H from Xylella fastidiosa (strain 9a5c).